A 121-amino-acid polypeptide reads, in one-letter code: Large ribosomal subunit protein bL20 (121 aa).

Belongs to the bacterial ribosomal protein bL20 family.

Its function is as follows. Binds directly to 23S ribosomal RNA and is necessary for the in vitro assembly process of the 50S ribosomal subunit. It is not involved in the protein synthesizing functions of that subunit. This is Large ribosomal subunit protein bL20 from Orientia tsutsugamushi (strain Ikeda) (Rickettsia tsutsugamushi).